The chain runs to 460 residues: UDP-N-acetylmuramoylalanine--D-glutamate ligase (460 aa).

123-129 (GTNGKTT) provides a ligand contact to ATP.

The protein belongs to the MurCDEF family.

It is found in the cytoplasm. The catalysed reaction is UDP-N-acetyl-alpha-D-muramoyl-L-alanine + D-glutamate + ATP = UDP-N-acetyl-alpha-D-muramoyl-L-alanyl-D-glutamate + ADP + phosphate + H(+). It functions in the pathway cell wall biogenesis; peptidoglycan biosynthesis. Functionally, cell wall formation. Catalyzes the addition of glutamate to the nucleotide precursor UDP-N-acetylmuramoyl-L-alanine (UMA). This is UDP-N-acetylmuramoylalanine--D-glutamate ligase (murD) from Enterococcus hirae.